A 215-amino-acid polypeptide reads, in one-letter code: High mobility group protein B1 (215 aa).

Residues 9-79 constitute a DNA-binding region (HMG box 1); it reads PRGKMSSYAF…RYEKEMKNYV (71 aa). Cys-23 is modified (cysteine sulfonic acid (-SO3H); alternate). An intrachain disulfide couples Cys-23 to Cys-45. Positions 27 to 43 are NLS 1; the sequence is HKKKHPDASVNFSEFSK. A Nuclear localization signal (NLS) 1 motif is present at residues 27–43; that stretch reads HKKKHPDASVNFSEFSK. Position 45 is a cysteine sulfonic acid (-SO3H); alternate (Cys-45). Positions 75-95 are disordered; it reads MKNYVPPKGETKKKFKDPNAP. The span at 83 to 94 shows a compositional bias: basic and acidic residues; that stretch reads GETKKKFKDPNA. The segment at residues 95 to 163 is a DNA-binding region (HMG box 2); that stretch reads PKRPPSAFFL…KYEKDIAAYR (69 aa). Cys-106 carries the post-translational modification Cysteine sulfonic acid (-SO3H). The segment covering 166 to 179 has biased composition (basic and acidic residues); it reads GKVDAGKKVVAKAE. The segment at 166–215 is disordered; it reads GKVDAGKKVVAKAEKSKKKKEEEEDEDEDEEDEEDEEEEEEEEEDDDDDE. Residues 178–184 are NLS 2; sequence AEKSKKK. The short motif at 178 to 184 is the Nuclear localization signal (NLS) 2 element; that stretch reads AEKSKKK. Acidic residues predominate over residues 187 to 215; sequence EEEDEDEDEEDEEDEEEEEEEEEDDDDDE. The tract at residues 196–210 is involved in intramolecular interaction with K-3; sequence EDEEDEEEEEEEEED. Positions 211 to 215 are involved in interaction with histone H3; sequence DDDDE.

This sequence belongs to the HMGB family. Post-translationally, reduction/oxidation of cysteine residues Cys-23, Cys-45 and Cys-106 and a possible intramolecular disulfide bond involving Cys-23 and Cys-45 give rise to different redox forms with specific functional activities: 1- fully reduced HMGB1 (HMGB1C23hC45hC106h), 2- disulfide HMGB1 (HMGB1C23-C45C106h) and 3- sulfonyl HMGB1 (HMGB1C23soC45soC106so).

Its subcellular location is the nucleus. It localises to the chromosome. The protein resides in the cytoplasm. The protein localises to the secreted. Functionally, multifunctional redox sensitive protein with various roles in different cellular compartments. Nuclear functions are attributed to fully reduced HGMB1. Associates with chromatin and binds DNA with a preference to non-canonical DNA structures such as single-stranded DNA, DNA-containing cruciforms or bent structures, supercoiled DNA and ZDNA. Can bent DNA and enhance DNA flexibility by looping thus providing a mechanism to promote activities on various gene promoters. Can restructure the canonical nucleosome. Proposed to be an universal biosensor for nucleic acids. May promote inflammatory response to sterile and infectious signals and may be involved in the coordination and integration of innate and adaptive immune responses. In the cytoplasm may function as sensor and/or chaperone for immunogenic nucleic acids, and mediate autophagy. May act as danger associated molecular pattern (DAMP) molecule that amplifies immune responses during tissue injury. The chain is High mobility group protein B1 (HMGB1) from Gallus gallus (Chicken).